Reading from the N-terminus, the 55-residue chain is Large ribosomal subunit protein bL33 (55 aa).

The protein belongs to the bacterial ribosomal protein bL33 family.

This Clavibacter sepedonicus (Clavibacter michiganensis subsp. sepedonicus) protein is Large ribosomal subunit protein bL33.